We begin with the raw amino-acid sequence, 582 residues long: Putative G-protein coupled receptor B0244.10 (582 aa).

Helical transmembrane passes span 25-45 (LYII…PLGL), 70-90 (ITFS…GFAV), 120-140 (WTFF…GLVI), and 159-179 (LLVQ…VFLT). An N-linked (GlcNAc...) asparagine glycan is attached at N190. The helical transmembrane segment at 199 to 218 (LTLGKWFIALYRFLFQMTNI) threads the bilayer. N-linked (GlcNAc...) asparagine glycans are attached at residues N221 and N237. Helical transmembrane passes span 253–273 (SLMI…AVLV), 296–316 (YIFV…IIII), 329–349 (TFAF…SLLG), 377–397 (IYII…PFGL), and 421–441 (WLLF…LLFV). N457 carries N-linked (GlcNAc...) asparagine glycosylation. The next 2 membrane-spanning stretches (helical) occupy residues 475–495 (TILV…AAFG) and 513–533 (LIFP…TFLL). N-linked (GlcNAc...) asparagine glycosylation is present at N538.

This sequence belongs to the G-protein coupled receptor 1 family. B0244 subfamily.

Its subcellular location is the cell membrane. This Caenorhabditis elegans protein is Putative G-protein coupled receptor B0244.10.